Reading from the N-terminus, the 449-residue chain is Na(+)/H(+) antiporter NhaA 1 (449 aa).

Helical transmembrane passes span 38–58, 79–99, 117–137, 145–165, 175–195, 198–218, 240–260, 311–331, 347–367, 390–410, and 422–442; these read GILLALCAVAAMVWANSPWAA, FTIREFINDGLMTLFFFVVGM, VLPLIAAMGGMIVPAALYAAF, AGWAIPMATDIAFSIGCLTLV, VFLTALAIFDDIGGILVIALF, SGLHVSWLVGALGVLAVLACL, MHHGGIHATLSGVVLGLFMPA, FVHLWHVPVAYGIVPLFALAN, PLPLGIIAGLFVGKQVGIFLF, GVAVVAGIGFTVALFVAGLAF, and LGILVGSLLSAVVGYALLRFV.

The protein belongs to the NhaA Na(+)/H(+) (TC 2.A.33) antiporter family.

It localises to the cell inner membrane. The enzyme catalyses Na(+)(in) + 2 H(+)(out) = Na(+)(out) + 2 H(+)(in). Its function is as follows. Na(+)/H(+) antiporter that extrudes sodium in exchange for external protons. This Myxococcus xanthus (strain DK1622) protein is Na(+)/H(+) antiporter NhaA 1.